The following is a 116-amino-acid chain: Large ribosomal subunit protein bL17 (116 aa).

This sequence belongs to the bacterial ribosomal protein bL17 family. Part of the 50S ribosomal subunit. Contacts protein L32.

This Deinococcus geothermalis (strain DSM 11300 / CIP 105573 / AG-3a) protein is Large ribosomal subunit protein bL17.